The primary structure comprises 338 residues: Ketol-acid reductoisomerase (NADP(+)) (338 aa).

One can recognise a KARI N-terminal Rossmann domain in the interval 1–181 (MKVYYDKDAD…GGTKGGVIET (181 aa)). Residues 24–27 (YGSQ), R47, S52, and 82–85 (DETQ) each bind NADP(+). The active site involves H107. G133 contributes to the NADP(+) binding site. Residues 182–327 (SFREETETDL…AELRAMMPWI (146 aa)) enclose the KARI C-terminal knotted domain. Positions 190, 194, 226, and 230 each coordinate Mg(2+). S251 contributes to the substrate binding site.

This sequence belongs to the ketol-acid reductoisomerase family. Requires Mg(2+) as cofactor.

It catalyses the reaction (2R)-2,3-dihydroxy-3-methylbutanoate + NADP(+) = (2S)-2-acetolactate + NADPH + H(+). The enzyme catalyses (2R,3R)-2,3-dihydroxy-3-methylpentanoate + NADP(+) = (S)-2-ethyl-2-hydroxy-3-oxobutanoate + NADPH + H(+). Its pathway is amino-acid biosynthesis; L-isoleucine biosynthesis; L-isoleucine from 2-oxobutanoate: step 2/4. It functions in the pathway amino-acid biosynthesis; L-valine biosynthesis; L-valine from pyruvate: step 2/4. Involved in the biosynthesis of branched-chain amino acids (BCAA). Catalyzes an alkyl-migration followed by a ketol-acid reduction of (S)-2-acetolactate (S2AL) to yield (R)-2,3-dihydroxy-isovalerate. In the isomerase reaction, S2AL is rearranged via a Mg-dependent methyl migration to produce 3-hydroxy-3-methyl-2-ketobutyrate (HMKB). In the reductase reaction, this 2-ketoacid undergoes a metal-dependent reduction by NADPH to yield (R)-2,3-dihydroxy-isovalerate. This chain is Ketol-acid reductoisomerase (NADP(+)), found in Laribacter hongkongensis (strain HLHK9).